The primary structure comprises 284 residues: MQNQKTVKIGNIDVANDKPFTLFAGMNVLESRDLAMQICEKYVEVTDRLGIPYVFKASFDKANRSSVHSYRGPGMEEGLKIFQELKDTFGVKIITDIHTEAQAQPVADVVDVIQLPAFLARQTDLVEAMAKTGAVINVKKPQFMSPDQVGNIIDKFSECGNENIILCERGSCMGYDNLVVDMLGFGVMKKASNGSPIIFDVTHSLQNRDPSGKASGGRRSQTVELAKAGLATGIAGLFIEAHPNPDKALCDGPSALPLDQLEPFLKQMKSLDDLIKGFEHIDIK.

It belongs to the KdsA family.

It localises to the cytoplasm. The catalysed reaction is D-arabinose 5-phosphate + phosphoenolpyruvate + H2O = 3-deoxy-alpha-D-manno-2-octulosonate-8-phosphate + phosphate. It participates in carbohydrate biosynthesis; 3-deoxy-D-manno-octulosonate biosynthesis; 3-deoxy-D-manno-octulosonate from D-ribulose 5-phosphate: step 2/3. It functions in the pathway bacterial outer membrane biogenesis; lipopolysaccharide biosynthesis. The chain is 2-dehydro-3-deoxyphosphooctonate aldolase from Aliivibrio fischeri (strain ATCC 700601 / ES114) (Vibrio fischeri).